A 115-amino-acid polypeptide reads, in one-letter code: DNA-binding protein PH1060 (115 aa).

The protein belongs to the PDCD5 family.

This is DNA-binding protein PH1060 from Pyrococcus horikoshii (strain ATCC 700860 / DSM 12428 / JCM 9974 / NBRC 100139 / OT-3).